The primary structure comprises 1302 residues: Cingulin-like protein 1 (1302 aa).

Residues 1–554 (MELYFGEYQH…ELTQQTNEET (554 aa)) form a head region. The short motif at 37–51 (AGSYGVSIRVQGIDG) is the ZIM element. The tract at residues 75 to 104 (PFPPPVINNLPLHSSNGSVPKENSEELQLP) is disordered. Residues serine 112 and serine 202 each carry the phosphoserine modification. 3 disordered regions span residues 186-209 (KKPW…EDPA), 251-305 (FTSG…TPTS), and 364-392 (PGLQ…VDSA). A compositionally biased stretch (polar residues) spans 195-204 (PSNSQPTSPS). A compositionally biased stretch (basic and acidic residues) spans 264-282 (AHPETKKTRPDVLPFRRQD). Phosphoserine is present on residues serine 283, serine 297, and serine 298. The span at 296–305 (SSSSSTTPTS) shows a compositional bias: low complexity. The segment covering 366 to 377 (LQRRGRSGKRNR) has biased composition (basic residues). The span at 378 to 388 (INTDDRKRSRS) shows a compositional bias: basic and acidic residues. Residues serine 388, serine 391, and serine 486 each carry the phosphoserine modification. Positions 604–1258 (NSTSEVKDLL…QLNSMKKDLR (655 aa)) form a coiled coil. Basic and acidic residues predominate over residues 655–664 (RSQHNEKVEE). Residues 655-675 (RSQHNEKVEENSTLQQRLEES) are disordered. Serine 708 carries the post-translational modification Phosphoserine. Disordered stretches follow at residues 903–929 (AAQG…SEQK) and 1263–1287 (PSKV…YEAP). A compositionally biased stretch (basic and acidic residues) spans 917-929 (QLSEKLKEESEQK). The segment at 1263 to 1302 (PSKVLDDMDDDDDLSTDGGSLYEAPVSYTFSKDSTVASQI) is tail.

This sequence belongs to the cingulin family. Homodimer or oligomer. Interacts with CD2AP and SH3BP1; probably part of a complex at cell junctions. As to expression, smooth muscle, spleen, testis, fetal brain, amygdala, corpus callosum, cerebellum, thalamus and subthalamic nucleus of adult brain.

It is found in the cell junction. The protein localises to the tight junction. Functionally, may be involved in anchoring the apical junctional complex, especially tight junctions, to actin-based cytoskeletons. The chain is Cingulin-like protein 1 (CGNL1) from Homo sapiens (Human).